The following is a 343-amino-acid chain: Pyridoxal 5'-phosphate synthase subunit PDX1 (343 aa).

D73 contacts D-ribose 5-phosphate. Catalysis depends on K130, which acts as the Schiff-base intermediate with D-ribose 5-phosphate. G202 contacts D-ribose 5-phosphate. Q214 contacts D-glyceraldehyde 3-phosphate. D-ribose 5-phosphate-binding positions include G263 and 284–285; that span reads GS.

The protein belongs to the PdxS/SNZ family.

The enzyme catalyses aldehydo-D-ribose 5-phosphate + D-glyceraldehyde 3-phosphate + L-glutamine = pyridoxal 5'-phosphate + L-glutamate + phosphate + 3 H2O + H(+). Its pathway is cofactor biosynthesis; pyridoxal 5'-phosphate biosynthesis. In terms of biological role, catalyzes the formation of pyridoxal 5'-phosphate from ribose 5-phosphate (RBP), glyceraldehyde 3-phosphate (G3P) and ammonia. The ammonia is provided by PDX2. Can also use ribulose 5-phosphate and dihydroxyacetone phosphate as substrates, resulting from enzyme-catalyzed isomerization of RBP and G3P, respectively. Also plays an indirect role in resistance to singlet oxygen-generating photosensitizers. This chain is Pyridoxal 5'-phosphate synthase subunit PDX1 (PDX1), found in Cercospora nicotianae (Barn spot disease fungus).